A 402-amino-acid polypeptide reads, in one-letter code: Argininosuccinate synthase (402 aa).

ATP contacts are provided by residues 10–18 (AYSGGLDTS) and A38. Y90 lines the L-citrulline pocket. Position 120 (G120) interacts with ATP. Residues T122, N126, and D127 each contribute to the L-aspartate site. N126 contacts L-citrulline. R130, S179, S188, E264, and Y276 together coordinate L-citrulline.

The protein belongs to the argininosuccinate synthase family. Type 1 subfamily. In terms of assembly, homotetramer.

It localises to the cytoplasm. It carries out the reaction L-citrulline + L-aspartate + ATP = 2-(N(omega)-L-arginino)succinate + AMP + diphosphate + H(+). The protein operates within amino-acid biosynthesis; L-arginine biosynthesis; L-arginine from L-ornithine and carbamoyl phosphate: step 2/3. The sequence is that of Argininosuccinate synthase from Psychromonas ingrahamii (strain DSM 17664 / CCUG 51855 / 37).